The primary structure comprises 104 residues: Phosphoribosyl-ATP pyrophosphatase (104 aa).

Belongs to the PRA-PH family.

It is found in the cytoplasm. It carries out the reaction 1-(5-phospho-beta-D-ribosyl)-ATP + H2O = 1-(5-phospho-beta-D-ribosyl)-5'-AMP + diphosphate + H(+). It participates in amino-acid biosynthesis; L-histidine biosynthesis; L-histidine from 5-phospho-alpha-D-ribose 1-diphosphate: step 2/9. The protein is Phosphoribosyl-ATP pyrophosphatase of Methanoregula boonei (strain DSM 21154 / JCM 14090 / 6A8).